Here is a 994-residue protein sequence, read N- to C-terminus: Valine--tRNA ligase (994 aa).

Residues 43–53 (PNVTGTLHMGH) carry the 'HIGH' region motif. Residues 332-356 (IASGATSDTTDTPSDSDASNASNQH) are disordered. A compositionally biased stretch (low complexity) spans 333–353 (ASGATSDTTDTPSDSDASNAS). The 'KMSKS' region motif lies at 585-589 (KMSKS). Position 588 (K588) interacts with ATP. A disordered region spans residues 691-713 (TAHSPAQHQAGQDGQDVPRTPQP). The stretch at 928-994 (LIDVDAERAR…NGLRERRTTL (67 aa)) forms a coiled coil.

The protein belongs to the class-I aminoacyl-tRNA synthetase family. ValS type 1 subfamily. As to quaternary structure, monomer.

Its subcellular location is the cytoplasm. It catalyses the reaction tRNA(Val) + L-valine + ATP = L-valyl-tRNA(Val) + AMP + diphosphate. Catalyzes the attachment of valine to tRNA(Val). As ValRS can inadvertently accommodate and process structurally similar amino acids such as threonine, to avoid such errors, it has a 'posttransfer' editing activity that hydrolyzes mischarged Thr-tRNA(Val) in a tRNA-dependent manner. This chain is Valine--tRNA ligase, found in Xylella fastidiosa (strain M23).